The chain runs to 186 residues: Dihydrofolate reductase (186 aa).

Positions 3–183 constitute a DHFR domain; the sequence is KFSLIVAVCA…IQYQYRIYEK (181 aa). NADP(+)-binding positions include Ala-9 and 15 to 21; that span reads GIGIKGD. 29 to 34 lines the substrate pocket; that stretch reads ELKYFS. Residue 53 to 55 participates in NADP(+) binding; it reads RKT. Arg-69 serves as a coordination point for substrate. Residues 75–77 and 116–123 contribute to the NADP(+) site; these read TRD and GGNAVYKE.

It belongs to the dihydrofolate reductase family.

The catalysed reaction is (6S)-5,6,7,8-tetrahydrofolate + NADP(+) = 7,8-dihydrofolate + NADPH + H(+). Its pathway is cofactor biosynthesis; tetrahydrofolate biosynthesis; 5,6,7,8-tetrahydrofolate from 7,8-dihydrofolate: step 1/1. Key enzyme in folate metabolism. Catalyzes an essential reaction for de novo glycine and purine synthesis, and for DNA precursor synthesis. The polypeptide is Dihydrofolate reductase (DHFR) (Aedes albopictus (Asian tiger mosquito)).